We begin with the raw amino-acid sequence, 488 residues long: Katanin p60 ATPase-containing subunit A-like 1 (488 aa).

The disordered stretch occupies residues 84–184; it reads FPNPVPEEGP…EQKKFDGTGY (101 aa). Basic and acidic residues predominate over residues 144 to 167; sequence KPDRPNTRDGRGNKAKEEKSKRNA. 246-253 lines the ATP pocket; it reads GPPGTGKT.

It belongs to the AAA ATPase family. Katanin p60 subunit A1 subfamily. A-like 1 sub-subfamily.

The protein localises to the cytoplasm. Its subcellular location is the cytoskeleton. It localises to the spindle pole. The protein resides in the spindle. It catalyses the reaction n ATP + n H2O + a microtubule = n ADP + n phosphate + (n+1) alpha/beta tubulin heterodimers.. Regulates microtubule dynamics in Sertoli cells, a process that is essential for spermiogenesis and male fertility. Severs microtubules in an ATP-dependent manner, promoting rapid reorganization of cellular microtubule arrays. The chain is Katanin p60 ATPase-containing subunit A-like 1 (katnal1) from Danio rerio (Zebrafish).